The chain runs to 250 residues: uncharacterized protein (250 aa).

Residue Lys-17 forms a Glycyl lysine isopeptide (Lys-Gly) (interchain with G-Cter in ubiquitin) linkage. Residues 30 to 67 (REEDYVATSKDNIHHHPCDWSAKPSQRQNENEQKSTIR) form a disordered region.

This is an uncharacterized protein from Saccharomyces cerevisiae (strain ATCC 204508 / S288c) (Baker's yeast).